Here is a 706-residue protein sequence, read N- to C-terminus: Glutamine-dependent NAD(+) synthetase (706 aa).

Positions 5-275 (VTVATCALNQ…VEVLTATLDL (271 aa)) constitute a CN hydrolase domain. The Proton acceptor; for glutaminase activity role is filled by Glu45. Lys114 (for glutaminase activity) is an active-site residue. Cys175 acts as the Nucleophile; for glutaminase activity in catalysis. The interval 325-706 (YHSPEEEISL…AEPQSLDGVD (382 aa)) is ligase. An ATP-binding site is contributed by 355–362 (PLSGGVDS). Ser357 is a catalytic residue.

It in the C-terminal section; belongs to the NAD synthetase family. Homohexamer.

The catalysed reaction is deamido-NAD(+) + L-glutamine + ATP + H2O = L-glutamate + AMP + diphosphate + NAD(+) + H(+). The protein operates within cofactor biosynthesis; NAD(+) biosynthesis; NAD(+) from deamido-NAD(+) (L-Gln route): step 1/1. Its function is as follows. Catalyzes the final step of the nicotinamide adenine dinucleotide (NAD) de novo synthesis pathway, the ATP-dependent amidation of deamido-NAD using L-glutamine as a nitrogen source. In Homo sapiens (Human), this protein is Glutamine-dependent NAD(+) synthetase (NADSYN1).